The sequence spans 162 residues: Probable chemoreceptor glutamine deamidase CheD (162 aa).

It belongs to the CheD family.

The enzyme catalyses L-glutaminyl-[protein] + H2O = L-glutamyl-[protein] + NH4(+). Functionally, probably deamidates glutamine residues to glutamate on methyl-accepting chemotaxis receptors (MCPs), playing an important role in chemotaxis. The chain is Probable chemoreceptor glutamine deamidase CheD from Clostridium botulinum (strain Alaska E43 / Type E3).